We begin with the raw amino-acid sequence, 610 residues long: Glutamine--fructose-6-phosphate aminotransferase [isomerizing] (610 aa).

The Nucleophile; for GATase activity role is filled by Cys2. The 217-residue stretch at 2–218 (CGIVGAVAQR…EGDVAEITRR (217 aa)) folds into the Glutamine amidotransferase type-2 domain. SIS domains lie at 286-426 (AAEI…QQGR) and 459-600 (LATD…VDQP). Lys605 functions as the For Fru-6P isomerization activity in the catalytic mechanism.

As to quaternary structure, homodimer.

Its subcellular location is the cytoplasm. It carries out the reaction D-fructose 6-phosphate + L-glutamine = D-glucosamine 6-phosphate + L-glutamate. Its function is as follows. Catalyzes the first step in hexosamine metabolism, converting fructose-6P into glucosamine-6P using glutamine as a nitrogen source. In Vibrio vulnificus (strain CMCP6), this protein is Glutamine--fructose-6-phosphate aminotransferase [isomerizing].